The primary structure comprises 170 residues: Co-chaperone protein HscB homolog (170 aa).

Residues 5-79 (DHFSLFGLPA…RARYLCEQAG (75 aa)) enclose the J domain.

This sequence belongs to the HscB family. As to quaternary structure, interacts with HscA and stimulates its ATPase activity.

In terms of biological role, co-chaperone involved in the maturation of iron-sulfur cluster-containing proteins. Seems to help targeting proteins to be folded toward HscA. The protein is Co-chaperone protein HscB homolog of Bordetella parapertussis (strain 12822 / ATCC BAA-587 / NCTC 13253).